The following is a 927-amino-acid chain: Probable RNA-dependent RNA polymerase 4 (927 aa).

The interval 98 to 135 (GESPVQFPRTPGKKSCRASQAEVSLDREDPSPKFLRGD) is disordered. A compositionally biased stretch (basic and acidic residues) spans 121–135 (SLDREDPSPKFLRGD).

This sequence belongs to the RdRP family.

The enzyme catalyses RNA(n) + a ribonucleoside 5'-triphosphate = RNA(n+1) + diphosphate. Probably involved in the RNA silencing pathway and required for the generation of small interfering RNAs (siRNAs). The chain is Probable RNA-dependent RNA polymerase 4 (RDR4) from Arabidopsis thaliana (Mouse-ear cress).